We begin with the raw amino-acid sequence, 182 residues long: ATP synthase subunit delta (182 aa).

It belongs to the ATPase delta chain family. As to quaternary structure, F-type ATPases have 2 components, F(1) - the catalytic core - and F(0) - the membrane proton channel. F(1) has five subunits: alpha(3), beta(3), gamma(1), delta(1), epsilon(1). F(0) has three main subunits: a(1), b(2) and c(10-14). The alpha and beta chains form an alternating ring which encloses part of the gamma chain. F(1) is attached to F(0) by a central stalk formed by the gamma and epsilon chains, while a peripheral stalk is formed by the delta and b chains.

Its subcellular location is the cell inner membrane. F(1)F(0) ATP synthase produces ATP from ADP in the presence of a proton or sodium gradient. F-type ATPases consist of two structural domains, F(1) containing the extramembraneous catalytic core and F(0) containing the membrane proton channel, linked together by a central stalk and a peripheral stalk. During catalysis, ATP synthesis in the catalytic domain of F(1) is coupled via a rotary mechanism of the central stalk subunits to proton translocation. In terms of biological role, this protein is part of the stalk that links CF(0) to CF(1). It either transmits conformational changes from CF(0) to CF(1) or is implicated in proton conduction. The polypeptide is ATP synthase subunit delta (Myxococcus xanthus (strain DK1622)).